Reading from the N-terminus, the 498-residue chain is Glycerol kinase (498 aa).

Thr-12 serves as a coordination point for ADP. The ATP site is built by Thr-12, Thr-13, and Ser-14. Residue Thr-12 participates in sn-glycerol 3-phosphate binding. Arg-16 is a binding site for ADP. Sn-glycerol 3-phosphate is bound by residues Arg-82, Glu-83, and Tyr-134. Residues Arg-82, Glu-83, and Tyr-134 each contribute to the glycerol site. Residue His-230 is modified to Phosphohistidine; by HPr. Asp-244 is a binding site for sn-glycerol 3-phosphate. Asp-244 and Gln-245 together coordinate glycerol. Thr-266 and Gly-309 together coordinate ADP. Positions 266, 309, 313, and 410 each coordinate ATP. ADP is bound by residues Gly-410 and Asn-414.

Belongs to the FGGY kinase family. Homotetramer and homodimer (in equilibrium). Post-translationally, the phosphoenolpyruvate-dependent sugar phosphotransferase system (PTS), including enzyme I, and histidine-containing protein (HPr) are required for the phosphorylation, which leads to the activation of the enzyme.

It catalyses the reaction glycerol + ATP = sn-glycerol 3-phosphate + ADP + H(+). It participates in polyol metabolism; glycerol degradation via glycerol kinase pathway; sn-glycerol 3-phosphate from glycerol: step 1/1. Its activity is regulated as follows. Activated by phosphorylation and inhibited by fructose 1,6-bisphosphate (FBP). Its function is as follows. Key enzyme in the regulation of glycerol uptake and metabolism. Catalyzes the phosphorylation of glycerol to yield sn-glycerol 3-phosphate. The sequence is that of Glycerol kinase from Staphylococcus aureus (strain MW2).